The chain runs to 338 residues: DNA-directed RNA polymerase subunit alpha (338 aa).

The segment at 1–226 is alpha N-terminal domain (alpha-NTD); sequence MLIAQRPTLS…ELFGLARELN (226 aa). Residues 240 to 338 form an alpha C-terminal domain (alpha-CTD) region; the sequence is DEQLAADLAL…DDAFVEDEQY (99 aa).

Belongs to the RNA polymerase alpha chain family. In terms of assembly, homodimer. The RNAP catalytic core consists of 2 alpha, 1 beta, 1 beta' and 1 omega subunit. When a sigma factor is associated with the core the holoenzyme is formed, which can initiate transcription.

The enzyme catalyses RNA(n) + a ribonucleoside 5'-triphosphate = RNA(n+1) + diphosphate. Its function is as follows. DNA-dependent RNA polymerase catalyzes the transcription of DNA into RNA using the four ribonucleoside triphosphates as substrates. The polypeptide is DNA-directed RNA polymerase subunit alpha (Nocardioides sp. (strain ATCC BAA-499 / JS614)).